Here is a 483-residue protein sequence, read N- to C-terminus: Matrix metalloproteinase-20 (483 aa).

The signal sequence occupies residues 1–22; the sequence is MKVLPASGLAVFLIMALKFSTA. Positions 23–107 are excised as a propeptide; it reads APSLVAASPR…PRCGVPDVAN (85 aa). A Cysteine switch motif is present at residues 98–105; it reads PRCGVPDV. Position 100 (Cys-100) interacts with Zn(2+). Glu-164, Ala-165, and Asp-166 together coordinate Ca(2+). Zn(2+) is bound by residues His-176 and Asp-178. Ca(2+) is bound by residues Asp-183, Gly-184, Arg-186, and Thr-188. His-191 serves as a coordination point for Zn(2+). Glu-197, Gly-198, Gly-200, and Asp-202 together coordinate Ca(2+). His-204 contributes to the Zn(2+) binding site. Residues Asp-206 and Glu-209 each contribute to the Ca(2+) site. His-226 provides a ligand contact to Zn(2+). Glu-227 is an active-site residue. His-230 and His-236 together coordinate Zn(2+). 4 Hemopexin repeats span residues 293–343, 344–389, 391–439, and 440–483; these read PDLC…FPQL, MSNV…GFPR, VQQI…FSGV, and NGQI…WIGC. The cysteines at positions 296 and 483 are disulfide-linked.

It belongs to the peptidase M10A family. The cofactor is Zn(2+). Ca(2+) serves as cofactor. Autoactivates at least at the 107-Asn-|-Tyr-108 site. Expressed specifically in the enamel organ.

Its subcellular location is the secreted. The protein resides in the extracellular space. It localises to the extracellular matrix. Functionally, degrades amelogenin, the major protein component of the enamel matrix and two of the macromolecules characterizing the cartilage extracellular matrix: aggrecan and the cartilage oligomeric matrix protein (COMP). May play a central role in tooth enamel formation. Cleaves aggrecan at the '360-Asn-|-Phe-361' site. The chain is Matrix metalloproteinase-20 (MMP20) from Homo sapiens (Human).